The chain runs to 293 residues: Acetyl-coenzyme A carboxylase carboxyl transferase subunit beta (293 aa).

A CoA carboxyltransferase N-terminal domain is found at 29–293 (LWSKCPECGQ…GCKPMELTSA (265 aa)). Residues Cys-33, Cys-36, Cys-52, and Cys-55 each contribute to the Zn(2+) site. The C4-type zinc-finger motif lies at 33-55 (CPECGQVVYLKDLKLNASVCANC).

It belongs to the AccD/PCCB family. In terms of assembly, acetyl-CoA carboxylase is a heterohexamer composed of biotin carboxyl carrier protein (AccB), biotin carboxylase (AccC) and two subunits each of ACCase subunit alpha (AccA) and ACCase subunit beta (AccD). The cofactor is Zn(2+).

It is found in the cytoplasm. It catalyses the reaction N(6)-carboxybiotinyl-L-lysyl-[protein] + acetyl-CoA = N(6)-biotinyl-L-lysyl-[protein] + malonyl-CoA. The protein operates within lipid metabolism; malonyl-CoA biosynthesis; malonyl-CoA from acetyl-CoA: step 1/1. Component of the acetyl coenzyme A carboxylase (ACC) complex. Biotin carboxylase (BC) catalyzes the carboxylation of biotin on its carrier protein (BCCP) and then the CO(2) group is transferred by the transcarboxylase to acetyl-CoA to form malonyl-CoA. The chain is Acetyl-coenzyme A carboxylase carboxyl transferase subunit beta from Synechococcus sp. (strain CC9605).